A 140-amino-acid chain; its full sequence is Fluoride-specific ion channel FluC 1 (140 aa).

The next 4 helical transmembrane spans lie at 4–24 (LYLAVGGFCGAVGRYFLASFI), 32–52 (FPLATWIINLGGCLAMGFILT), 70–90 (TGMLGAFTTFSTFSVETLHLL), and 99–119 (LLYLFASLAGGLICMQTGIFL). Na(+) contacts are provided by Gly-74 and Thr-77.

The protein belongs to the fluoride channel Fluc/FEX (TC 1.A.43) family.

Its subcellular location is the cell membrane. The enzyme catalyses fluoride(in) = fluoride(out). Its activity is regulated as follows. Na(+) is not transported, but it plays an essential structural role and its presence is essential for fluoride channel function. In terms of biological role, fluoride-specific ion channel. Important for reducing fluoride concentration in the cell, thus reducing its toxicity. This chain is Fluoride-specific ion channel FluC 1, found in Moorella thermoacetica (strain ATCC 39073 / JCM 9320).